Consider the following 341-residue polypeptide: UDP-N-acetylenolpyruvoylglucosamine reductase (341 aa).

The 173-residue stretch at 13 to 185 (FGVEQSCLSM…TAVGLRLPKA (173 aa)) folds into the FAD-binding PCMH-type domain. R161 is a catalytic residue. The active-site Proton donor is S231. The active site involves E327.

The protein belongs to the MurB family. FAD is required as a cofactor.

The protein localises to the cytoplasm. The catalysed reaction is UDP-N-acetyl-alpha-D-muramate + NADP(+) = UDP-N-acetyl-3-O-(1-carboxyvinyl)-alpha-D-glucosamine + NADPH + H(+). The protein operates within cell wall biogenesis; peptidoglycan biosynthesis. Its function is as follows. Cell wall formation. This Shewanella sp. (strain MR-4) protein is UDP-N-acetylenolpyruvoylglucosamine reductase.